Reading from the N-terminus, the 85-residue chain is Small ribosomal subunit protein uS17 (85 aa).

Belongs to the universal ribosomal protein uS17 family. In terms of assembly, part of the 30S ribosomal subunit.

Its function is as follows. One of the primary rRNA binding proteins, it binds specifically to the 5'-end of 16S ribosomal RNA. This Blochmanniella floridana protein is Small ribosomal subunit protein uS17.